The sequence spans 83 residues: Beta-toxin Ct7 (83 aa).

Positions 1 to 18 are cleaved as a signal peptide; it reads MKVLILIIASVLLIGVEC. Residues 19–81 enclose the LCN-type CS-alpha/beta domain; the sequence is KDGYPMNSEG…VWDSATNKCG (63 aa). Disulfide bonds link C29–C80, C33–C54, C40–C61, and C44–C63. G81 bears the Glycine amide mark. G82 is a propeptide.

The protein belongs to the long (4 C-C) scorpion toxin superfamily. Sodium channel inhibitor family. Beta subfamily. As to expression, expressed by the venom gland.

The protein resides in the secreted. Its function is as follows. Beta toxins bind voltage-independently at site-4 of sodium channels (Nav) and shift the voltage of activation toward more negative potentials thereby affecting sodium channel activation and promoting spontaneous and repetitive firing. Is possibly toxic to mice, freshwater shrimp and crickets. The chain is Beta-toxin Ct7 from Centruroides tecomanus (Scorpion).